Here is a 165-residue protein sequence, read N- to C-terminus: Protein eva-1 homolog B (165 aa).

The helical transmembrane segment at 29–49 (GLYFVLGVCFGLLLTLCLLVI) threads the bilayer. Disordered stretches follow at residues 57–109 (PRPR…GPLN) and 143–165 (LLGT…MHYY). Residues 74 to 84 (EPEDDDEDEED) show a composition bias toward acidic residues. 3 positions are modified to phosphothreonine: Thr85, Thr148, and Thr158.

Belongs to the EVA1 family.

The protein resides in the membrane. This Homo sapiens (Human) protein is Protein eva-1 homolog B (EVA1B).